The sequence spans 529 residues: Peptide chain release factor 3 (529 aa).

The region spanning 10-278 (ARRRTFAIIS…MFVEFAPGPQ (269 aa)) is the tr-type G domain. Residues 19–26 (SHPDAGKT), 87–91 (DTPGH), and 141–144 (NKMD) contribute to the GTP site.

It belongs to the TRAFAC class translation factor GTPase superfamily. Classic translation factor GTPase family. PrfC subfamily.

It is found in the cytoplasm. Its function is as follows. Increases the formation of ribosomal termination complexes and stimulates activities of RF-1 and RF-2. It binds guanine nucleotides and has strong preference for UGA stop codons. It may interact directly with the ribosome. The stimulation of RF-1 and RF-2 is significantly reduced by GTP and GDP, but not by GMP. The polypeptide is Peptide chain release factor 3 (Nitratidesulfovibrio vulgaris (strain DSM 19637 / Miyazaki F) (Desulfovibrio vulgaris)).